Consider the following 110-residue polypeptide: MASIIYSPKDIFEQDFKVSMRGYDKKEVDVFLDDVIKDYENYLEQIEKLQMENRRLQQALDKKESEASNVRNSGTAMYNQKPIAQSATNFDILKRISRLEKEVFGRQIRE.

Residues Leu32–Ser73 adopt a coiled-coil conformation.

This sequence belongs to the GpsB family. In terms of assembly, forms polymers through the coiled coil domains. Interacts with PBP1, MreC and EzrA.

It localises to the cytoplasm. In terms of biological role, divisome component that associates with the complex late in its assembly, after the Z-ring is formed, and is dependent on DivIC and PBP2B for its recruitment to the divisome. Together with EzrA, is a key component of the system that regulates PBP1 localization during cell cycle progression. Its main role could be the removal of PBP1 from the cell pole after pole maturation is completed. Also contributes to the recruitment of PBP1 to the division complex. Not essential for septum formation. The sequence is that of Cell cycle protein GpsB from Streptococcus agalactiae serotype Ia (strain ATCC 27591 / A909 / CDC SS700).